Here is a 181-residue protein sequence, read N- to C-terminus: Large ribosomal subunit protein uL10 (181 aa).

It belongs to the universal ribosomal protein uL10 family. Part of the ribosomal stalk of the 50S ribosomal subunit. The N-terminus interacts with L11 and the large rRNA to form the base of the stalk. The C-terminus forms an elongated spine to which L12 dimers bind in a sequential fashion forming a multimeric L10(L12)X complex.

Its function is as follows. Forms part of the ribosomal stalk, playing a central role in the interaction of the ribosome with GTP-bound translation factors. The protein is Large ribosomal subunit protein uL10 of Bradyrhizobium diazoefficiens (strain JCM 10833 / BCRC 13528 / IAM 13628 / NBRC 14792 / USDA 110).